Consider the following 287-residue polypeptide: Shikimate dehydrogenase (NADP(+)) (287 aa).

Residues 20 to 22 (SRS) and T67 each bind shikimate. The active-site Proton acceptor is K71. An NADP(+)-binding site is contributed by E84. Positions 93 and 108 each coordinate shikimate. Residues 132-136 (GAGGA), 156-161 (NRTAAR), and M226 contribute to the NADP(+) site. Residue Y228 participates in shikimate binding. Residue G250 participates in NADP(+) binding.

The protein belongs to the shikimate dehydrogenase family. As to quaternary structure, homodimer.

The catalysed reaction is shikimate + NADP(+) = 3-dehydroshikimate + NADPH + H(+). The protein operates within metabolic intermediate biosynthesis; chorismate biosynthesis; chorismate from D-erythrose 4-phosphate and phosphoenolpyruvate: step 4/7. Functionally, involved in the biosynthesis of the chorismate, which leads to the biosynthesis of aromatic amino acids. Catalyzes the reversible NADPH linked reduction of 3-dehydroshikimate (DHSA) to yield shikimate (SA). This is Shikimate dehydrogenase (NADP(+)) from Bordetella pertussis (strain Tohama I / ATCC BAA-589 / NCTC 13251).